Reading from the N-terminus, the 41-residue chain is uncharacterized protein (41 aa).

The chain crosses the membrane as a helical span at residues 10-32 (LIILAVPFMIKTSLKTNLIFFFL).

The protein localises to the cell inner membrane. This is an uncharacterized protein from Escherichia coli (strain K12).